The primary structure comprises 429 residues: MSNIVDTAIEAIVAREILDSRGRPTIEAEVHLLSGAVGLAQVPSGASTGTFEAHELRDKDKSRYGGKGVLKAVHNVNEVLAPKLIDLDAINQELIDRTMIALDGSGNKSNLGANAILAVSLAAARAGAASLGIPLYRYLGGPLANLLPVPLMNVINGGAHAANNVDFQEFMIVPVGATSFREALRWGAEVFATLSEVLHDKGLLTGVGDEGGFAPNLESNQVALELLVAAIEKAGYKPGEQVALALDVAASEFYKEGQYVYDGRPHAPTEFIDYLGQLVDQYPIVSIEDGLHEEDWQNWQLLTQKVGSRVQLVGDDLFVTNATRLQKGIQEKAGNAILIKLNQIGSLTETLETIDLGTRNGFRSVISHRSGETEDTTIADLAVATRAGQIKTGSLCRSERVAKYNRLLRIEDELGDRAVYAGAVGLGPK.

Gln-168 is a (2R)-2-phosphoglycerate binding site. Glu-210 serves as the catalytic Proton donor. Positions 247, 288, and 315 each coordinate Mg(2+). Residues Lys-340, Arg-369, Ser-370, and Lys-391 each contribute to the (2R)-2-phosphoglycerate site. The Proton acceptor role is filled by Lys-340.

Belongs to the enolase family. Mg(2+) serves as cofactor.

Its subcellular location is the cytoplasm. It localises to the secreted. The protein resides in the cell surface. It carries out the reaction (2R)-2-phosphoglycerate = phosphoenolpyruvate + H2O. It functions in the pathway carbohydrate degradation; glycolysis; pyruvate from D-glyceraldehyde 3-phosphate: step 4/5. Functionally, catalyzes the reversible conversion of 2-phosphoglycerate (2-PG) into phosphoenolpyruvate (PEP). It is essential for the degradation of carbohydrates via glycolysis. The chain is Enolase from Trichormus variabilis (strain ATCC 29413 / PCC 7937) (Anabaena variabilis).